Consider the following 266-residue polypeptide: Tryptophan synthase alpha chain (266 aa).

Residues Glu-47 and Asp-58 each act as proton acceptor in the active site.

Belongs to the TrpA family. In terms of assembly, tetramer of two alpha and two beta chains.

Its subcellular location is the plastid. The protein localises to the chloroplast. It carries out the reaction (1S,2R)-1-C-(indol-3-yl)glycerol 3-phosphate + L-serine = D-glyceraldehyde 3-phosphate + L-tryptophan + H2O. It participates in amino-acid biosynthesis; L-tryptophan biosynthesis; L-tryptophan from chorismate: step 5/5. In terms of biological role, the alpha subunit is responsible for the aldol cleavage of indoleglycerol phosphate to indole and glyceraldehyde 3-phosphate. The chain is Tryptophan synthase alpha chain from Cyanidium caldarium (Red alga).